Here is a 100-residue protein sequence, read N- to C-terminus: Putative exopolysaccharide production repressor protein y4xQ (100 aa).

The next 2 helical transmembrane spans lie at 9 to 29 and 35 to 55; these read ILWLFLCANTLIVYLVTGSIS and TMVGSLLLQLTYFANVLFLLW. The interval 66 to 100 is disordered; that stretch reads TTGQFHGEEQPGDPRIAGTHGRTDGDPCFEDEDSR.

The protein to Rhizobium exopolysaccharide production repressor protein (ExoX).

Its subcellular location is the cell membrane. Functionally, could be involved in the inhibition of exopolysaccharide synthesis (EPS) and nodulation ability (nod). The chain is Putative exopolysaccharide production repressor protein y4xQ from Sinorhizobium fredii (strain NBRC 101917 / NGR234).